A 531-amino-acid chain; its full sequence is Squalene epoxidase 1 (531 aa).

Residues 9–29 traverse the membrane as a helical segment; that stretch reads ILPLLISSLLISFVAFYGFFV. FAD contacts are provided by residues 70-71, 90-91, R98, R169, V185, D347, and M360; these read VA and ER. 2 helical membrane-spanning segments follow: residues 458-478 and 483-503; these read LVCH…IPFP and IWLG…IIKA.

It belongs to the squalene monooxygenase family. Requires FAD as cofactor. As to expression, expressed in seedlings, leaves, stems, inflorescences, sepals, style and siliques. Expressed in expanded cotyledons, root tips and cortical cells of the root elongation zone, but not in root hair cells. In leaves, expressed in most cells, with a very strong expression in stomata.

The protein localises to the membrane. The enzyme catalyses squalene + reduced [NADPH--hemoprotein reductase] + O2 = (S)-2,3-epoxysqualene + oxidized [NADPH--hemoprotein reductase] + H2O + H(+). Its pathway is terpene metabolism; lanosterol biosynthesis; lanosterol from farnesyl diphosphate: step 2/3. Catalyzes the stereospecific oxidation of squalene to (S)-2,3-epoxysqualene, and is considered to be a rate-limiting enzyme in steroid biosynthesis. Can produce not only oxidosqualene, but also 2,3:22,23-dioxidosqualene. Main squalene epoxidase in the root. Sqe1 mutants may show defects in membrane lipid rafts, impairing the correct localization of RHD2 NADPH oxidase and the proper polarized production of ROS. This is Squalene epoxidase 1 (SQE1) from Arabidopsis thaliana (Mouse-ear cress).